The sequence spans 153 residues: Ribosome maturation factor RimP (153 aa).

It belongs to the RimP family.

Its subcellular location is the cytoplasm. Required for maturation of 30S ribosomal subunits. This Histophilus somni (strain 2336) (Haemophilus somnus) protein is Ribosome maturation factor RimP.